The following is an 851-amino-acid chain: Glycogen phosphorylase, liver form (851 aa).

Residue Ala2 is modified to N-acetylalanine. The residue at position 15 (Ser15) is a Phosphoserine; by PHK; in form phosphorylase a. AMP-binding positions include Asp43–Asn45, Tyr76, and Arg310. Lys364 carries the N6-succinyllysine modification. Lys470 is subject to N6-acetyllysine. 3 positions are modified to phosphoserine: Ser524, Ser561, and Ser639. Lys681 carries the post-translational modification N6-(pyridoxal phosphate)lysine. Residue Lys796 is modified to N6-acetyllysine.

This sequence belongs to the glycogen phosphorylase family. As to quaternary structure, homodimer; enzymatically active. Interacts with PPP1R3B; recruits the phosphatase PP1 which dephosphorylates and inactivates PYGL/glycogen phosphorylase. It depends on pyridoxal 5'-phosphate as a cofactor. In terms of processing, acetylation, which is up-regulated by glucose and insulin and down-regulated by glucagon, inhibits the glycogen phosphorylase activity by promoting PPP1R3B-mediated recruitment of phosphatase PP1 and Ser-15 dephosphorylation. Phosphorylation at Ser-15 converts inactive phosphorylase b into active phosphorylase a. Dephosphorylation of Ser-15 by phosphatase PP1 inactivates the enzyme.

It localises to the cytoplasm. The protein localises to the cytosol. It catalyses the reaction [(1-&gt;4)-alpha-D-glucosyl](n) + phosphate = [(1-&gt;4)-alpha-D-glucosyl](n-1) + alpha-D-glucose 1-phosphate. Its activity is regulated as follows. Allosterically regulated through the non-covalent binding of metabolites, being activated by AMP and inhibited by ATP, ADP, and glucose-6-phosphate. The activity is also controlled by post-translational modifications including phosphorylation and acetylation. In terms of biological role, allosteric enzyme that catalyzes the rate-limiting step in glycogen catabolism, the phosphorolytic cleavage of glycogen to produce glucose-1-phosphate, and plays a central role in maintaining cellular and organismal glucose homeostasis. The chain is Glycogen phosphorylase, liver form from Bos taurus (Bovine).